Reading from the N-terminus, the 385-residue chain is MHDSEIFKFKDMMMMSCTVQTLVLVPWFLVVFVLAGGEDSSETTAMFPAMFVFGDSLVDNGNNNHLNSLARSNYLPYGIDFAGNQPTGRFSNGKTIVDFIGELLGLPEIPAFMDTVDGGVDILHGVNYASAAGGILEETGRHLGERFSMGRQVENFEKTLMEISRSMRKESVKEYMAKSLVVVSLGNNDYINNYLKPRLFLSSSIYDPTSFADLLLSNFTTHLLELYGKGFRKFVIAGVGPLGCIPDQLAAQAALPGECVEAVNEMAELFNNRLVSLVDRLNSDNKTASEAIFVYGNTYGAAVDILTNPFNYGFEVTDRGCCGVGRNRGEITCLPLAVPCAFRDRHVFWDAFHPTQAFNLIIALRAFNGSKSDCYPINLSQLSRL.

The signal sequence occupies residues 1–35 (MHDSEIFKFKDMMMMSCTVQTLVLVPWFLVVFVLA). Catalysis depends on Ser56, which acts as the Nucleophile. Residues Asn218 and Asn285 are each glycosylated (N-linked (GlcNAc...) asparagine). Residues Asp350 and His353 contribute to the active site. 2 N-linked (GlcNAc...) asparagine glycosylation sites follow: Asn368 and Asn378.

The protein belongs to the 'GDSL' lipolytic enzyme family.

The protein resides in the secreted. This chain is GDSL esterase/lipase At5g08460, found in Arabidopsis thaliana (Mouse-ear cress).